The sequence spans 347 residues: Heat-inducible transcription repressor HrcA (347 aa).

The protein belongs to the HrcA family.

Functionally, negative regulator of class I heat shock genes (grpE-dnaK-dnaJ and groELS operons). Prevents heat-shock induction of these operons. This Sphingopyxis alaskensis (strain DSM 13593 / LMG 18877 / RB2256) (Sphingomonas alaskensis) protein is Heat-inducible transcription repressor HrcA.